The primary structure comprises 107 residues: MGCIDKLNYEILYKGGFKECAEYIRKNFKNIKEMEAGYEIFEGIFLIGIPPIPVAYEDNYVIFPYTKPCYGTFVLKINLDEINKDKKEEKKEKDKGKKGLLSRLKFW.

The segment covering Glu-88–Lys-97 has biased composition (basic and acidic residues). The segment at Glu-88–Trp-107 is disordered. A compositionally biased stretch (basic residues) spans Lys-98–Trp-107.

This is an uncharacterized protein from Methanocaldococcus jannaschii (strain ATCC 43067 / DSM 2661 / JAL-1 / JCM 10045 / NBRC 100440) (Methanococcus jannaschii).